Here is a 293-residue protein sequence, read N- to C-terminus: Bifunctional protein FolD (293 aa).

Residues 165-167 (GRS), Ser190, and Ile231 each bind NADP(+).

This sequence belongs to the tetrahydrofolate dehydrogenase/cyclohydrolase family. In terms of assembly, homodimer.

The enzyme catalyses (6R)-5,10-methylene-5,6,7,8-tetrahydrofolate + NADP(+) = (6R)-5,10-methenyltetrahydrofolate + NADPH. The catalysed reaction is (6R)-5,10-methenyltetrahydrofolate + H2O = (6R)-10-formyltetrahydrofolate + H(+). It functions in the pathway one-carbon metabolism; tetrahydrofolate interconversion. In terms of biological role, catalyzes the oxidation of 5,10-methylenetetrahydrofolate to 5,10-methenyltetrahydrofolate and then the hydrolysis of 5,10-methenyltetrahydrofolate to 10-formyltetrahydrofolate. This Synechococcus sp. (strain CC9902) protein is Bifunctional protein FolD.